A 581-amino-acid polypeptide reads, in one-letter code: Adenine deaminase (581 aa).

The protein belongs to the metallo-dependent hydrolases superfamily. Adenine deaminase family. Mn(2+) is required as a cofactor.

It catalyses the reaction adenine + H2O + H(+) = hypoxanthine + NH4(+). The chain is Adenine deaminase from Lysinibacillus sphaericus (strain C3-41).